A 294-amino-acid chain; its full sequence is Acetyl-coenzyme A carboxylase carboxyl transferase subunit beta (294 aa).

Residues 25–294 form the CoA carboxyltransferase N-terminal domain; sequence VWTKCTSCEQ…PLVVPVDGSH (270 aa). The Zn(2+) site is built by cysteine 29, cysteine 32, cysteine 48, and cysteine 51. The C4-type zinc finger occupies 29-51; the sequence is CTSCEQVLYSAELERNLEVCPKC.

The protein belongs to the AccD/PCCB family. In terms of assembly, acetyl-CoA carboxylase is a heterohexamer composed of biotin carboxyl carrier protein (AccB), biotin carboxylase (AccC) and two subunits each of ACCase subunit alpha (AccA) and ACCase subunit beta (AccD). The cofactor is Zn(2+).

It is found in the cytoplasm. It carries out the reaction N(6)-carboxybiotinyl-L-lysyl-[protein] + acetyl-CoA = N(6)-biotinyl-L-lysyl-[protein] + malonyl-CoA. Its pathway is lipid metabolism; malonyl-CoA biosynthesis; malonyl-CoA from acetyl-CoA: step 1/1. Functionally, component of the acetyl coenzyme A carboxylase (ACC) complex. Biotin carboxylase (BC) catalyzes the carboxylation of biotin on its carrier protein (BCCP) and then the CO(2) group is transferred by the transcarboxylase to acetyl-CoA to form malonyl-CoA. This Aliivibrio fischeri (strain ATCC 700601 / ES114) (Vibrio fischeri) protein is Acetyl-coenzyme A carboxylase carboxyl transferase subunit beta.